The chain runs to 499 residues: Probable malate:quinone oxidoreductase 4 (499 aa).

The protein belongs to the MQO family. FAD is required as a cofactor.

The catalysed reaction is (S)-malate + a quinone = a quinol + oxaloacetate. The protein operates within carbohydrate metabolism; tricarboxylic acid cycle; oxaloacetate from (S)-malate (quinone route): step 1/1. The polypeptide is Probable malate:quinone oxidoreductase 4 (Staphylococcus epidermidis (strain ATCC 12228 / FDA PCI 1200)).